Consider the following 49-residue polypeptide: Large ribosomal subunit protein bL33 (49 aa).

Belongs to the bacterial ribosomal protein bL33 family.

In Clostridium beijerinckii (strain ATCC 51743 / NCIMB 8052) (Clostridium acetobutylicum), this protein is Large ribosomal subunit protein bL33.